A 397-amino-acid chain; its full sequence is Ribosomal RNA large subunit methyltransferase I (397 aa).

Residues 2 to 79 (TAAIYLVKGR…KEEINKAFFV (78 aa)) enclose the PUA domain.

This sequence belongs to the methyltransferase superfamily. RlmI family.

Its subcellular location is the cytoplasm. It carries out the reaction cytidine(1962) in 23S rRNA + S-adenosyl-L-methionine = 5-methylcytidine(1962) in 23S rRNA + S-adenosyl-L-homocysteine + H(+). In terms of biological role, specifically methylates the cytosine at position 1962 (m5C1962) of 23S rRNA. The protein is Ribosomal RNA large subunit methyltransferase I of Vibrio campbellii (strain ATCC BAA-1116).